A 320-amino-acid chain; its full sequence is Glutathione synthetase (320 aa).

The ATP-grasp domain maps to 127–312 (KLAITEFPRF…VAGLMIDALE (186 aa)). Position 153–209 (153–209 (LAEHEDIILKPLDGMGGAGIFRIQNTDHNIGVIIETLTRYGTRTIMAQRFLPEIREG)) interacts with ATP. Positions 283 and 285 each coordinate Mg(2+).

The protein belongs to the prokaryotic GSH synthase family. Requires Mg(2+) as cofactor. The cofactor is Mn(2+).

The catalysed reaction is gamma-L-glutamyl-L-cysteine + glycine + ATP = glutathione + ADP + phosphate + H(+). It participates in sulfur metabolism; glutathione biosynthesis; glutathione from L-cysteine and L-glutamate: step 2/2. The protein is Glutathione synthetase of Nitrosomonas europaea (strain ATCC 19718 / CIP 103999 / KCTC 2705 / NBRC 14298).